A 115-amino-acid polypeptide reads, in one-letter code: Promotilin (115 aa).

The signal sequence occupies residues 1–25; that stretch reads MLSRKATAVLLAVHAAAMLASQTEA. The segment at 43 to 72 is disordered; sequence RYKGQKKSLSVQQRSEEVGPVDPTEPWEEK.

The protein belongs to the motilin family.

It is found in the secreted. In terms of biological role, plays an important role in the regulation of interdigestive gastrointestinal motility and indirectly causes rhythmic contraction of duodenal and colonic smooth muscle. This chain is Promotilin (MLN), found in Bos taurus (Bovine).